The chain runs to 321 residues: Tetraacyldisaccharide 4'-kinase (321 aa).

ATP is bound at residue 54–61 (SVGGTGKT).

It belongs to the LpxK family.

It carries out the reaction a lipid A disaccharide + ATP = a lipid IVA + ADP + H(+). Its pathway is glycolipid biosynthesis; lipid IV(A) biosynthesis; lipid IV(A) from (3R)-3-hydroxytetradecanoyl-[acyl-carrier-protein] and UDP-N-acetyl-alpha-D-glucosamine: step 6/6. In terms of biological role, transfers the gamma-phosphate of ATP to the 4'-position of a tetraacyldisaccharide 1-phosphate intermediate (termed DS-1-P) to form tetraacyldisaccharide 1,4'-bis-phosphate (lipid IVA). The protein is Tetraacyldisaccharide 4'-kinase of Rickettsia peacockii (strain Rustic).